The sequence spans 81 residues: Small ribosomal subunit protein bS16 (81 aa).

It belongs to the bacterial ribosomal protein bS16 family.

This chain is Small ribosomal subunit protein bS16, found in Caldicellulosiruptor saccharolyticus (strain ATCC 43494 / DSM 8903 / Tp8T 6331).